The primary structure comprises 224 residues: MIRLAAIDVDGTLTDRDRLISTKAIESIRSAEKKGLTVSLLSGNVIPVVYALKIFLGINGPVFGENGGIMFDNDGSIKKFFSNEGTNKFLEEMSKRTSMRSILTNRWREASTGFDIDPEDVDYVRKEAESRGFVIFYSGYSWHLMNRGEDKAFAVNKLKEMYSLEYDEILVIGDSNNDMPMFQLPVRKACPANATDNIKAVSDFVSDYSYGEEIGQIFKHFELM.

Aspartate 8 functions as the Nucleophile in the catalytic mechanism. Mg(2+) contacts are provided by aspartate 8, aspartate 10, glycine 11, and glycine 43. Lysine 151 contributes to the substrate binding site. The Mg(2+) site is built by aspartate 174, serine 175, and aspartate 178.

It belongs to the HAD-like hydrolase superfamily. Archaeal SPP-like hydrolase family. Homodimer. Requires Mg(2+) as cofactor.

It carries out the reaction 2-phosphoglycolate + H2O = glycolate + phosphate. Inhibited by Ca(2+) ions and by high chloride ion concentration. By contrast, low chloride concentration (up to 50 mM) slightly activate the enzyme. Its function is as follows. Catalyzes the dephosphorylation of 2-phosphoglycolate. Also has significant, but less efficient, pyrophosphatase activity, since it is able to catalyze the release of phosphate from inorganic pyrophosphate (PPi). The chain is Phosphoglycolate phosphatase from Thermoplasma acidophilum (strain ATCC 25905 / DSM 1728 / JCM 9062 / NBRC 15155 / AMRC-C165).